Consider the following 131-residue polypeptide: MTAANQNYGTGRRKSSSARVFIKPGNGNITIDQRSLDVYFGRETSRMVVRQPLELVELLDKLDLYITVKGGGISGQAGAIRHGITRALMEYDETLRPALRAAGFVTRDARRVERKKVGLHKARRRPQYSKR.

Belongs to the universal ribosomal protein uS9 family.

The protein is Small ribosomal subunit protein uS9 of Actinobacillus pleuropneumoniae serotype 5b (strain L20).